The primary structure comprises 156 residues: Small ribosomal subunit protein uS7 (156 aa).

The protein belongs to the universal ribosomal protein uS7 family. Part of the 30S ribosomal subunit. Contacts proteins S9 and S11.

One of the primary rRNA binding proteins, it binds directly to 16S rRNA where it nucleates assembly of the head domain of the 30S subunit. Is located at the subunit interface close to the decoding center, probably blocks exit of the E-site tRNA. The protein is Small ribosomal subunit protein uS7 of Methylorubrum extorquens (strain CM4 / NCIMB 13688) (Methylobacterium extorquens).